Consider the following 190-residue polypeptide: Dynactin subunit 6 (190 aa).

Thr186 carries the phosphothreonine; by CDK1 modification.

It belongs to the dynactin subunits 5/6 family. Dynactin subunit 6 subfamily. Subunit of dynactin, a multiprotein complex part of a tripartite complex with dynein and a adapter, such as BICDL1, BICD2 or HOOK3. The dynactin complex is built around ACTR1A/ACTB filament and consists of an actin-related filament composed of a shoulder domain, a pointed end and a barbed end. Its length is defined by its flexible shoulder domain. The soulder is composed of 2 DCTN1 subunits, 4 DCTN2 and 2 DCTN3. The 4 DCNT2 (via N-terminus) bind the ACTR1A filament and act as molecular rulers to determine the length. The pointed end is important for binding dynein-dynactin cargo adapters. Consists of 4 subunits: ACTR10, DCNT4, DCTN5 and DCTN6. Within the complex DCTN6 forms a heterodimer with DCTN5. The barbed end is composed of a CAPZA1:CAPZB heterodimers, which binds ACTR1A/ACTB filament and dynactin and stabilizes dynactin. Interacts with PLK1. Interacts with N4BP2L1. In terms of processing, phosphorylation at Thr-186 by CDK1 during mitotic prometaphase creates a binding site for PLK1 that facilitates its recruitment to kinetochores.

The protein localises to the cytoplasm. It is found in the cytoskeleton. It localises to the chromosome. Its subcellular location is the centromere. The protein resides in the kinetochore. Functionally, part of the dynactin complex that activates the molecular motor dynein for ultra-processive transport along microtubules. This is Dynactin subunit 6 (DCTN6) from Pongo abelii (Sumatran orangutan).